The primary structure comprises 595 residues: GRB2-associated-binding protein 3 (595 aa).

The PH domain occupies 5 to 117; sequence DTVCMGWLIK…WVHSISQVCN (113 aa). The tract at residues 295–339 is disordered; sequence SGVKELNIMSNTPPPRPPKPSYLSEQRQDQPLLTGHSSNKKPGYT. A compositionally biased stretch (polar residues) spans 317-331; it reads LSEQRQDQPLLTGHS. The residue at position 346 (Ser346) is a Phosphoserine. 2 disordered regions span residues 389–408 and 418–463; these read PSAEDSYVPMSPKGTASELR and PMSS…QEHT. Polar residues predominate over residues 454 to 463; sequence RNLSTIQEHT. Ser480 bears the Phosphoserine mark. Positions 493–513 are disordered; sequence STPSEEEEEEEEEEEEEEEEE. Acidic residues predominate over residues 496-513; sequence SEEEEEEEEEEEEEEEEE.

Belongs to the GAB family. Interacts with PIK3R/p85, SHP2 and GRAP2/MONA. May interact with Grb2. In terms of processing, phosphorylated on tyrosine residue(s) after macrophage colony-stimulating factor (M-CSF) receptor stimulation. Highly expressed in spleen and thymus and weakly in brain, heart, lung, kidney, uterus, and embryonic stem cells. Also expressed in myeloid and macrophage cell lines.

The chain is GRB2-associated-binding protein 3 (Gab3) from Mus musculus (Mouse).